The chain runs to 206 residues: UPF0301 protein Msil_1255 (206 aa).

The protein belongs to the UPF0301 (AlgH) family.

The protein is UPF0301 protein Msil_1255 of Methylocella silvestris (strain DSM 15510 / CIP 108128 / LMG 27833 / NCIMB 13906 / BL2).